The primary structure comprises 284 residues: NAD kinase (284 aa).

Residue D70 is the Proton acceptor of the active site. Residues 70–71, 139–140, K167, D169, L177, 180–185, and Q236 each bind NAD(+); these read DG, NE, and TAYNLS.

It belongs to the NAD kinase family. A divalent metal cation is required as a cofactor.

It is found in the cytoplasm. The catalysed reaction is NAD(+) + ATP = ADP + NADP(+) + H(+). Involved in the regulation of the intracellular balance of NAD and NADP, and is a key enzyme in the biosynthesis of NADP. Catalyzes specifically the phosphorylation on 2'-hydroxyl of the adenosine moiety of NAD to yield NADP. The chain is NAD kinase from Helicobacter pylori (strain P12).